Consider the following 1168-residue polypeptide: Myosin IC heavy chain (1168 aa).

One can recognise a Myosin motor domain in the interval 7–666; the sequence is HGVDDMVMLT…SVFSLEELRD (660 aa). 101 to 108 is a binding site for ATP; sequence GESGAGKT. S311 carries the post-translational modification Phosphoserine. An actin-binding region spans residues 542-564; sequence INILVATLSKCTPHYIRCIKPNE. Residues 704 to 892 form the TH1 domain; sequence KERRRLSLER…KVSVAPGLPP (189 aa). Disordered stretches follow at residues 876–909, 921–978, and 1036–1168; these read DGKV…GGAS, ILGA…APGP, and AAAP…PPGM. The segment covering 895–909 has biased composition (polar residues); it reads APNIQAPQETSGGAS. 2 stretches are compositionally biased toward gly residues: residues 924–939 and 950–959; these read AKGG…GGPS and PGGGGGGPSP. The segment covering 960-978 has biased composition (low complexity); that stretch reads FGGRPSPSGPPAAASAPGP. The SH3 domain occupies 976 to 1035; it reads PGPEQARALYDFAAENPDELTFNEGAVVTVINKSNPDWWEGELNGQRGVFPASYVELIPR. Residues 1040–1052 are compositionally biased toward pro residues; that stretch reads APGPSGGPRPAPP. 2 stretches are compositionally biased toward gly residues: residues 1063 to 1083 and 1090 to 1099; these read GGPG…GRGG and GRAGPPGGRG. A compositionally biased stretch (low complexity) spans 1100-1112; that stretch reads MPAPGGAAPRGRG. Over residues 1120 to 1141 the composition is skewed to gly residues; the sequence is GPPGGGRGGAPPPGGMRGRGGP. A compositionally biased stretch (low complexity) spans 1152–1161; it reads GGMMPPRGRA.

It belongs to the TRAFAC class myosin-kinesin ATPase superfamily. Myosin family. In terms of assembly, myosin I heavy chain is single-headed. Dimer of a heavy and a light chain. Inability to self-assemble into filaments.

In terms of biological role, myosin is a protein that binds to F-actin and has ATPase activity that is activated by F-actin. The protein is Myosin IC heavy chain (MIC) of Acanthamoeba castellanii (Amoeba).